Here is a 512-residue protein sequence, read N- to C-terminus: Maturase K (512 aa).

This sequence belongs to the intron maturase 2 family. MatK subfamily.

The protein resides in the plastid. It is found in the chloroplast. Usually encoded in the trnK tRNA gene intron. Probably assists in splicing its own and other chloroplast group II introns. This Filarum manserichense protein is Maturase K.